The primary structure comprises 445 residues: MIHAERIRNLNGEEPDLRGSYVVYWMQASVRSHWNHALEYAIETANSLKKPLIVVFGLTDDFPNANSRHYRFLIEGLRDVRSNLRERGIQLVVERDSPPSVLLKYADDAAAAVTDRGYLDIQKEWVDEAAGALHIPLTQVESNVIVPVETASDKEEYSAGTFKPKIKRHLKRFMVPLRMRTLKMDSLDLEPGPEFEDAVRDFRAPEDLEPSVFRGGTSTALSIFSEFLREKLECFERYRNDPVKNCLSNMSPYLHFGQISPLYLALRASEAGECPEFLEELIVRRELSMNFVHYSDSYSSISCLPEWAQRTLMDHVADPREYEYSLRELESASTHDPYWNAAQQEMVITGKMHGYMRMYWGKKILEWTDHPARAYDIALYLNDRYEIDGRDPNGFAGVAWCFGKHDRAWAEREIFGKVRYMNDRGLKRKFRIDEYVDRIRGLMDE.

The region spanning 20 to 148 (SYVVYWMQAS…QVESNVIVPV (129 aa)) is the Photolyase/cryptochrome alpha/beta domain. Residue Arg-239 participates in DNA binding.

This sequence belongs to the DNA photolyase class-2 family. FAD serves as cofactor. Requires coenzyme F420-(gamma-Glu)n as cofactor.

It carries out the reaction cyclobutadipyrimidine (in DNA) = 2 pyrimidine residues (in DNA).. Functionally, involved in repair of UV radiation-induced DNA damage. Catalyzes the light-dependent monomerization (300-600 nm) of cyclobutyl pyrimidine dimers (in cis-syn configuration), which are formed between adjacent bases on the same DNA strand upon exposure to ultraviolet radiation. The sequence is that of Deoxyribodipyrimidine photo-lyase (phr) from Methanothermobacter thermautotrophicus (strain ATCC 29096 / DSM 1053 / JCM 10044 / NBRC 100330 / Delta H) (Methanobacterium thermoautotrophicum).